A 354-amino-acid chain; its full sequence is Magnesium-protoporphyrin IX monomethyl ester [oxidative] cyclase (354 aa).

It belongs to the AcsF family. The cofactor is Fe cation.

It is found in the plastid. It localises to the chloroplast. The enzyme catalyses Mg-protoporphyrin IX 13-monomethyl ester + 3 NADPH + 3 O2 + 2 H(+) = 3,8-divinyl protochlorophyllide a + 3 NADP(+) + 5 H2O. It functions in the pathway porphyrin-containing compound metabolism; chlorophyll biosynthesis (light-independent). Its function is as follows. Catalyzes the formation of the isocyclic ring in chlorophyll biosynthesis. Mediates the cyclase reaction, which results in the formation of divinylprotochlorophyllide (Pchlide) characteristic of all chlorophylls from magnesium-protoporphyrin IX 13-monomethyl ester (MgPMME). The sequence is that of Magnesium-protoporphyrin IX monomethyl ester [oxidative] cyclase from Cyanidium caldarium (Red alga).